Reading from the N-terminus, the 252-residue chain is Flagellar L-ring protein (252 aa).

Positions 1 to 25 are cleaved as a signal peptide; it reads MSKSVPLQRIVLVAALMATGGLAGG. Cys26 carries N-palmitoyl cysteine lipidation. Cys26 is lipidated: S-diacylglycerol cysteine.

The protein belongs to the FlgH family. As to quaternary structure, the basal body constitutes a major portion of the flagellar organelle and consists of four rings (L,P,S, and M) mounted on a central rod.

It localises to the cell outer membrane. Its subcellular location is the bacterial flagellum basal body. Its function is as follows. Assembles around the rod to form the L-ring and probably protects the motor/basal body from shearing forces during rotation. This is Flagellar L-ring protein from Rhodopseudomonas palustris (strain ATCC BAA-98 / CGA009).